Here is a 73-residue protein sequence, read N- to C-terminus: MNNTSTMIEFTGKFWTYFTLVFMMLIIGFFFVITSLVAAILNKLCDLNDHHTNSLDIRTGLRNDTQSITRAHV.

The Intravirion portion of the chain corresponds to 1 to 19; that stretch reads MNNTSTMIEFTGKFWTYFT. The chain crosses the membrane as a helical; Signal-anchor for type II membrane protein span at residues 20 to 40; the sequence is LVFMMLIIGFFFVITSLVAAI. The Virion surface portion of the chain corresponds to 41-73; it reads LNKLCDLNDHHTNSLDIRTGLRNDTQSITRAHV. Residue Asn-63 is glycosylated (N-linked (GlcNAc...) asparagine; by host).

It belongs to the orthopneumovirus small hydrophobic protein family. In terms of assembly, homopentamer forming a funnel-like pore. Interacts with glycoprotein G; this interaction occurs on the surface of virion particles and infected cells. Interacts with host BCAP31 (via C-terminus); this interaction is direct. Four species of SH have been detected in infected cell cytoplasm: a 7.5 kDa non-glycosylated form (SH0), a 13-15 kDa form that contains one or two N-linked carbohydrate side chains of the high-mannose type (SHg), a 21-30 kDa polylactosaminoglycan-modified form of the protein (SHp), and the isoform generated by alternative translational initiation. Of these different forms, SH0 is by far the most abundant protein detected during virus infection. Post-translationally, tyrosine phosphorylated.

The protein localises to the virion membrane. It is found in the host cell membrane. The protein resides in the host Golgi apparatus membrane. It localises to the host endoplasmic reticulum membrane. Channel activity is inhibited by copper. Also inhibited by small-molecule pyronin B. Functionally, viroporin that forms a homopentameric ion channel displaying low ion selectivity. May play a role in virus morphogenesis and pathogenicity at various stages of the viral life cycle. Accumulates at the membrane of the Golgi apparatus in infected cells and may facilitate virus release by modifying the secretory pathway. May enhance host membrane permeability and disrupt cellular ion homeostasis, which can be sensed as damage-associated molecular patterns/danger signals, triggering NLRP3 inflammasome activation and inflammatory immune response. Also inhibits host TNFA-mediated signaling pathway and may delay apoptosis, allowing time for the virus to replicate. This chain is Small hydrophobic protein (SH), found in Bovine respiratory syncytial virus (strain A51908) (BRS).